Here is a 223-residue protein sequence, read N- to C-terminus: 7-cyano-7-deazaguanine synthase (223 aa).

10 to 20 is an ATP binding site; the sequence is FSGGQDSTTCL. Zn(2+) is bound by residues Cys188, Cys197, Cys200, and Cys203.

It belongs to the QueC family. It depends on Zn(2+) as a cofactor.

It catalyses the reaction 7-carboxy-7-deazaguanine + NH4(+) + ATP = 7-cyano-7-deazaguanine + ADP + phosphate + H2O + H(+). Its pathway is purine metabolism; 7-cyano-7-deazaguanine biosynthesis. Functionally, catalyzes the ATP-dependent conversion of 7-carboxy-7-deazaguanine (CDG) to 7-cyano-7-deazaguanine (preQ(0)). This is 7-cyano-7-deazaguanine synthase from Phocaeicola vulgatus (strain ATCC 8482 / DSM 1447 / JCM 5826 / CCUG 4940 / NBRC 14291 / NCTC 11154) (Bacteroides vulgatus).